A 419-amino-acid polypeptide reads, in one-letter code: UDP-N-acetylglucosamine 1-carboxyvinyltransferase (419 aa).

22 to 23 provides a ligand contact to phosphoenolpyruvate; sequence KN. Arginine 93 is a UDP-N-acetyl-alpha-D-glucosamine binding site. Cysteine 117 serves as the catalytic Proton donor. Residue cysteine 117 is modified to 2-(S-cysteinyl)pyruvic acid O-phosphothioketal. Positions 306 and 328 each coordinate UDP-N-acetyl-alpha-D-glucosamine.

Belongs to the EPSP synthase family. MurA subfamily.

The protein localises to the cytoplasm. The catalysed reaction is phosphoenolpyruvate + UDP-N-acetyl-alpha-D-glucosamine = UDP-N-acetyl-3-O-(1-carboxyvinyl)-alpha-D-glucosamine + phosphate. Its pathway is cell wall biogenesis; peptidoglycan biosynthesis. Functionally, cell wall formation. Adds enolpyruvyl to UDP-N-acetylglucosamine. The sequence is that of UDP-N-acetylglucosamine 1-carboxyvinyltransferase from Thioalkalivibrio sulfidiphilus (strain HL-EbGR7).